Reading from the N-terminus, the 617-residue chain is Dihydroxy-acid dehydratase (617 aa).

Aspartate 81 serves as a coordination point for Mg(2+). Cysteine 122 is a binding site for [2Fe-2S] cluster. Mg(2+)-binding residues include aspartate 123 and lysine 124. Lysine 124 carries the post-translational modification N6-carboxylysine. Cysteine 195 is a [2Fe-2S] cluster binding site. A Mg(2+)-binding site is contributed by glutamate 491. The active-site Proton acceptor is serine 517.

Belongs to the IlvD/Edd family. As to quaternary structure, homodimer. Requires [2Fe-2S] cluster as cofactor. Mg(2+) is required as a cofactor.

It catalyses the reaction (2R)-2,3-dihydroxy-3-methylbutanoate = 3-methyl-2-oxobutanoate + H2O. It carries out the reaction (2R,3R)-2,3-dihydroxy-3-methylpentanoate = (S)-3-methyl-2-oxopentanoate + H2O. It functions in the pathway amino-acid biosynthesis; L-isoleucine biosynthesis; L-isoleucine from 2-oxobutanoate: step 3/4. The protein operates within amino-acid biosynthesis; L-valine biosynthesis; L-valine from pyruvate: step 3/4. Functionally, functions in the biosynthesis of branched-chain amino acids. Catalyzes the dehydration of (2R,3R)-2,3-dihydroxy-3-methylpentanoate (2,3-dihydroxy-3-methylvalerate) into 2-oxo-3-methylpentanoate (2-oxo-3-methylvalerate) and of (2R)-2,3-dihydroxy-3-methylbutanoate (2,3-dihydroxyisovalerate) into 2-oxo-3-methylbutanoate (2-oxoisovalerate), the penultimate precursor to L-isoleucine and L-valine, respectively. The protein is Dihydroxy-acid dehydratase of Rhodospirillum rubrum (strain ATCC 11170 / ATH 1.1.1 / DSM 467 / LMG 4362 / NCIMB 8255 / S1).